The following is a 146-amino-acid chain: Ferredoxin-type protein FwdE (146 aa).

2 consecutive 4Fe-4S ferredoxin-type domains span residues 90–115 and 116–145; these read IKLF…TLDN and FTVG…FIKE. [4Fe-4S] cluster-binding residues include Cys125, Cys128, Cys131, and Cys135.

[4Fe-4S] cluster serves as cofactor.

This chain is Ferredoxin-type protein FwdE (fwdE), found in Methanocaldococcus jannaschii (strain ATCC 43067 / DSM 2661 / JAL-1 / JCM 10045 / NBRC 100440) (Methanococcus jannaschii).